A 109-amino-acid chain; its full sequence is Large ribosomal subunit protein uL22 (109 aa).

Belongs to the universal ribosomal protein uL22 family. As to quaternary structure, part of the 50S ribosomal subunit.

This protein binds specifically to 23S rRNA; its binding is stimulated by other ribosomal proteins, e.g. L4, L17, and L20. It is important during the early stages of 50S assembly. It makes multiple contacts with different domains of the 23S rRNA in the assembled 50S subunit and ribosome. Functionally, the globular domain of the protein is located near the polypeptide exit tunnel on the outside of the subunit, while an extended beta-hairpin is found that lines the wall of the exit tunnel in the center of the 70S ribosome. In Polynucleobacter asymbioticus (strain DSM 18221 / CIP 109841 / QLW-P1DMWA-1) (Polynucleobacter necessarius subsp. asymbioticus), this protein is Large ribosomal subunit protein uL22.